The primary structure comprises 410 residues: Peptidase T (410 aa).

H78 contacts Zn(2+). Residue D80 is part of the active site. D140 lines the Zn(2+) pocket. E174 acts as the Proton acceptor in catalysis. Positions 175, 197, and 379 each coordinate Zn(2+).

Belongs to the peptidase M20B family. Zn(2+) is required as a cofactor.

The protein resides in the cytoplasm. The catalysed reaction is Release of the N-terminal residue from a tripeptide.. Its function is as follows. Cleaves the N-terminal amino acid of tripeptides. The chain is Peptidase T from Staphylococcus saprophyticus subsp. saprophyticus (strain ATCC 15305 / DSM 20229 / NCIMB 8711 / NCTC 7292 / S-41).